Here is a 965-residue protein sequence, read N- to C-terminus: Forespore membrane adapter protein MUG56 (965 aa).

The interval 70–175 (SFLMHKSTDE…VQNSNSTSTS (106 aa)) is disordered. Positions 82-101 (DTPSNLDSPSTQNVGSTNNT) are enriched in polar residues. Residues 102–114 (RASQSLLRRSSSF) are compositionally biased toward low complexity. Positions 124-158 (THASTDNNPFSESSTLQPQTAERTSQQAVRSAITE) are enriched in polar residues. The segment covering 159–175 (TTNPSVSVQNSNSTSTS) has biased composition (low complexity). PH domains follow at residues 562 to 737 (PTPV…EVAS) and 800 to 961 (VIRM…KEIN).

This sequence belongs to the SPO71 family.

Its subcellular location is the cytoplasm. The protein localises to the nucleus. The protein resides in the prospore membrane. May recruit a lipid transfer protein to the forespore membrane during sporulation, thereby aiding forespore membrane formation. Required for meiosis. This is Forespore membrane adapter protein MUG56 from Schizosaccharomyces pombe (strain 972 / ATCC 24843) (Fission yeast).